The sequence spans 158 residues: UPF0758 protein VC_1786 (158 aa).

Residues 37 to 158 (TFARTENTTE…SVSFAERGWL (122 aa)) enclose the MPN domain. Positions 108, 110, and 121 each coordinate Zn(2+). The short motif at 108-121 (HNHPSGDPEPSQAD) is the JAMM motif element.

It belongs to the UPF0758 family.

The polypeptide is UPF0758 protein VC_1786 (Vibrio cholerae serotype O1 (strain ATCC 39315 / El Tor Inaba N16961)).